A 249-amino-acid polypeptide reads, in one-letter code: uncharacterized protein (249 aa).

The protein belongs to the ycf73 family.

Its subcellular location is the plastid. It is found in the chloroplast. This is an uncharacterized protein from Oryza sativa (Rice).